A 288-amino-acid chain; its full sequence is Glutamate racemase (288 aa).

Residues 1-21 (MAIARQDVNISSPEATTSDAQ) form a disordered region. Residues 8 to 21 (VNISSPEATTSDAQ) show a composition bias toward polar residues. Residues 32–33 (DS) and 64–65 (YG) each bind substrate. The active-site Proton donor/acceptor is Cys96. 97–98 (NT) is a substrate binding site. Cys209 (proton donor/acceptor) is an active-site residue. 210 to 211 (TH) serves as a coordination point for substrate.

It belongs to the aspartate/glutamate racemases family.

It carries out the reaction L-glutamate = D-glutamate. The protein operates within cell wall biogenesis; peptidoglycan biosynthesis. Provides the (R)-glutamate required for cell wall biosynthesis. The chain is Glutamate racemase from Proteus mirabilis (strain HI4320).